Reading from the N-terminus, the 155-residue chain is uncharacterized protein (155 aa).

A compositionally biased stretch (polar residues) spans 1-14 (MLTLSGWITTQVPP). The segment at 1–44 (MLTLSGWITTQVPPSSRAAADAKAARTGTAEQAEDPAAGTDAAD) is disordered. A compositionally biased stretch (low complexity) spans 17–30 (RAAADAKAARTGTA).

This is an uncharacterized protein from Pseudomonas aeruginosa (strain ATCC 15692 / DSM 22644 / CIP 104116 / JCM 14847 / LMG 12228 / 1C / PRS 101 / PAO1).